The chain runs to 454 residues: uncharacterized protein (454 aa).

A disordered region spans residues 422 to 454 (EWLPPAHLDHGQPRTNSYFHPEKLLHDSDEDDP).

Belongs to the Rv1128c/1148c/1588c/1702c/1945/3466 family.

This is an uncharacterized protein from Mycobacterium tuberculosis (strain CDC 1551 / Oshkosh).